A 416-amino-acid chain; its full sequence is Phosphoglycerate kinase (416 aa).

Substrate is bound by residues 28–30 (DMN), Arg44, 65–68 (HQSR), Arg122, and Arg162. ATP contacts are provided by residues Glu337 and 362–365 (GGHI).

This sequence belongs to the phosphoglycerate kinase family. In terms of assembly, monomer.

The protein resides in the cytoplasm. The enzyme catalyses (2R)-3-phosphoglycerate + ATP = (2R)-3-phospho-glyceroyl phosphate + ADP. Its pathway is carbohydrate degradation; glycolysis; pyruvate from D-glyceraldehyde 3-phosphate: step 2/5. The polypeptide is Phosphoglycerate kinase (Methanosarcina mazei (strain ATCC BAA-159 / DSM 3647 / Goe1 / Go1 / JCM 11833 / OCM 88) (Methanosarcina frisia)).